A 1848-amino-acid chain; its full sequence is MSVGELYSQCTRVWIPDPDEVWRSAELTKDYKEGDKSLQLRLEDETILEYPIDVQRNQLPFLRNPDILVGENDLTALSYLHEPAVLHNLKVRFLESNHIYTYCGIVLVAINPYEQLPIYGQDVIYTYSGQNMGDMDPHIFAVAEEAYKQMARDEKNQSIIVSGESGAGKTVSAKYAMRYFATVGGSASETNIEEKVLASSPIMEAIGNAKTTRNDNSSRFGKYIQIGFDKRYHIIGANMRTYLLEKSRVVFQADDERNYHIFYQLCAAAGLPEFKELALTSAEDFFYTSQGGDTSIEGVDDAEDFEKTRQAFTLLGVKESHQMSIFKIIASILHLGSVAIQAERDGDSCSISPQDVYLSNFCRLLGVEHSQMEHWLCHRKLVTTSETYVKTMSLQQVINARNALAKHIYAQLFGWIVEHINKALHTSLKQHSFIGVLDIYGFETFEVNSFEQFCINYANEKLQQQFNSHVFKLEQEEYMKEQIPWTLIDFYDNQPCIDLIEAKLGILDLLDEECKVPKGTDQNWAQKLYDRHSSSQHFQKPRMSNTAFIIVHFADKVEYLSDGFLEKNRDTVYEEQINILKASKFPLVADLFHDDKDPVPATTPGKGSSSKISVRSARPPMKVSNKEHKKTVGHQFRTSLHLLMETLNATTPHYVRCIKPNDEKLPFHFDPKRAVQQLRACGVLETIRISAAGYPSRWAYHDFFNRYRVLVKKRELANTDKKAICRSVLENLIKDPDKFQFGRTKIFFRAGQVAYLEKLRADKFRTATIMIQKTVRGWLQKVKYHRLKGATLTLQRYCRGHLARRLAEHLRRIRAAVVLQKHYRMQRARQAYQRVRRAAVVIQAFTRAMFVRRTYRQVLMEHKATTIQKHVRGWMARRHFQRLRDAAIVIQCAFRMLKARRELKALRIEARSAEHLKRLNVGMENKVVQLQRKIDEQNKEFKTLSEQLSVTTSTYTMEVERLKKELVHYQQSPGEDTSLRLQEEVESLRTELQRAHSERKILEDAHSREKDELRKRVADLEQENALLKDEKEQLNNQILCQSKDEFAQNSVKENLMKKELEEERSRYQNLVKEYSQLEQRYDNLRDEMTIIKQTPGHRRNPSNQSSLESDSNYPSISTSEIGDTEDALQQVEEIGLEKAAMDMTVFLKLQKRVRELEQERKKLQVQLEKREQQDSKKVQAEPPQTDIDLDPNADLAYNSLKRQELESENKKLKNDLNELRKAVADQATQNNSSHGSPDSYSLLLNQLKLAHEELEVRKEEVLILRTQIVSADQRRLAGRNAEPNINARSSWPNSEKHVDQEDAIEAYHGVCQTNSKTEDWGYLNEDGELGLAYQGLKQVARLLEAQLQAQSLEHEEEVEHLKAQLEALKEEMDKQQQTFCQTLLLSPEAQVEFGVQQEISRLTNENLDLKELVEKLEKNERKLKKQLKIYMKKAQDLEAAQALAQSERKRHELNRQVTVQRKEKDFQGMLEYHKEDEALLIRNLVTDLKPQMLSGTVPCLPAYILYMCIRHADYTNDDLKVHSLLTSTINGIKKVLKKHNDDFEMTSFWLSNTCRLLHCLKQYSGDEGFMTQNTAKQNEHCLKNFDLTEYRQVLSDLSIQIYQQLIKIAEGVLQPMIVSAMLENESIQGLSGVKPTGYRKRSSSMADGDNSYCLEAIIRQMNAFHTVMCDQGLDPEIILQVFKQLFYMINAVTLNNLLLRKDVCSWSTGMQLRYNISQLEEWLRGRNLHQSGAVQTMEPLIQAAQLLQLKKKTQEDAEAICSLCTSLSTQQIVKILNLYTPLNEFEERVTVAFIRTIQAQLQERNDPQQLLLDAKHMFPVLFPFNPSSLTMDSIHIPACLNLEFLNEV.

M1 bears the N-acetylmethionine mark. One can recognise a Myosin N-terminal SH3-like domain in the interval 8 to 60 (SQCTRVWIPDPDEVWRSAELTKDYKEGDKSLQLRLEDETILEYPIDVQRNQLP). Residues 21-40 (VWRSAELTKDYKEGDKSLQL) are requires for interaction with LIMA1. A Myosin motor domain is found at 69–761 (VGENDLTALS…QVAYLEKLRA (693 aa)). An ATP-binding site is contributed by 163–170 (GESGAGKT). The tract at residues 596–630 (KDPVPATTPGKGSSSKISVRSARPPMKVSNKEHKK) is disordered. An actin-binding region spans residues 640–662 (LHLLMETLNATTPHYVRCIKPND). IQ domains lie at 769–798 (IMIQ…QRYC), 792–821 (LTLQ…VLQK), 817–848 (VVLQ…FTRA), 840–869 (VVIQ…TIQK), 865–896 (TTIQ…AFRM), and 888–917 (IVIQ…EHLK). 2 coiled-coil regions span residues 899–1266 (ARRE…ILRT) and 1341–1471 (RLLE…GMLE). Disordered stretches follow at residues 1093–1123 (QTPG…EIGD) and 1166–1192 (QLEK…LDPN). Residues 1101–1121 (PSNQSSLESDSNYPSISTSEI) show a composition bias toward polar residues. The span at 1166 to 1179 (QLEKREQQDSKKVQ) shows a compositional bias: basic and acidic residues. Position 1446 is a phosphoserine (S1446). The Dilute domain occupies 1526–1803 (TSTINGIKKV…IRTIQAQLQE (278 aa)).

This sequence belongs to the TRAFAC class myosin-kinesin ATPase superfamily. Myosin family. Component of the CART complex, at least composed of ACTN4, HGS/HRS, MYO5B and TRIM3. Interacts with RAB11FIP2, RAB11A, and RAB8A. Found in a complex with CFTR and RAB11A. Interacts with NPC1L1;. Interacts with LIMA1.

It localises to the cytoplasm. Functionally, may be involved in vesicular trafficking via its association with the CART complex. The CART complex is necessary for efficient transferrin receptor recycling but not for EGFR degradation. Required in a complex with RAB11A and RAB11FIP2 for the transport of NPC1L1 to the plasma membrane. Together with RAB11A participates in CFTR trafficking to the plasma membrane and TF (transferrin) recycling in nonpolarized cells. Together with RAB11A and RAB8A participates in epithelial cell polarization. Together with RAB25 regulates transcytosis. Required for proper localization of bile salt export pump ABCB11 at the apical/canalicular plasma membrane of hepatocytes. The protein is Unconventional myosin-Vb (MYO5B) of Homo sapiens (Human).